The sequence spans 325 residues: GMP reductase (325 aa).

Residue Cys174 is the Thioimidate intermediate of the active site. NADP(+) is bound at residue 203–226 (LIADGGIRTHGDIAKSIRFGASMV).

The protein belongs to the IMPDH/GMPR family. GuaC type 2 subfamily.

The enzyme catalyses IMP + NH4(+) + NADP(+) = GMP + NADPH + 2 H(+). Catalyzes the irreversible NADPH-dependent deamination of GMP to IMP. It functions in the conversion of nucleobase, nucleoside and nucleotide derivatives of G to A nucleotides, and in maintaining the intracellular balance of A and G nucleotides. This Staphylococcus aureus (strain MRSA252) protein is GMP reductase.